Reading from the N-terminus, the 434-residue chain is Histidine--tRNA ligase (434 aa).

Belongs to the class-II aminoacyl-tRNA synthetase family. Homodimer.

Its subcellular location is the cytoplasm. It carries out the reaction tRNA(His) + L-histidine + ATP = L-histidyl-tRNA(His) + AMP + diphosphate + H(+). The sequence is that of Histidine--tRNA ligase from Latilactobacillus sakei subsp. sakei (strain 23K) (Lactobacillus sakei subsp. sakei).